The primary structure comprises 69 residues: Nodulin-3 (69 aa).

The signal sequence occupies residues 1-24 (MAKILKFVFAIILFFSLFLLSMEA).

This chain is Nodulin-3 (ENOD3), found in Pisum sativum (Garden pea).